A 398-amino-acid chain; its full sequence is Cell division protein FtsZ (398 aa).

Residues 24 to 28, 111 to 113, Glu-154, Arg-158, and Asp-202 each bind GTP; these read GAGGN and GTG. A disordered region spans residues 333–381; it reads GRNNKSETSPISQSEDSEKEKFKWPYSQSESTQDKTLETKPAEQVSEGA. A compositionally biased stretch (basic and acidic residues) spans 364–373; it reads TQDKTLETKP.

The protein belongs to the FtsZ family. Homodimer. Polymerizes to form a dynamic ring structure in a strictly GTP-dependent manner. Interacts directly with several other division proteins.

The protein localises to the cytoplasm. Its function is as follows. Essential cell division protein that forms a contractile ring structure (Z ring) at the future cell division site. The regulation of the ring assembly controls the timing and the location of cell division. One of the functions of the FtsZ ring is to recruit other cell division proteins to the septum to produce a new cell wall between the dividing cells. Binds GTP and shows GTPase activity. This is Cell division protein FtsZ from Wolbachia sp.